Consider the following 315-residue polypeptide: Glutaminase (315 aa).

Positions 70, 120, 166, 173, 197, 249, and 267 each coordinate substrate.

The protein belongs to the glutaminase family. In terms of assembly, homotetramer.

The catalysed reaction is L-glutamine + H2O = L-glutamate + NH4(+). This chain is Glutaminase, found in Mesorhizobium japonicum (strain LMG 29417 / CECT 9101 / MAFF 303099) (Mesorhizobium loti (strain MAFF 303099)).